Here is a 497-residue protein sequence, read N- to C-terminus: Acetyl-coenzyme A carboxylase carboxyl transferase subunit beta (497 aa).

Residues 217-489 form the CoA carboxyltransferase N-terminal domain; it reads LWLQCDNCYG…NQNSNQYSQY (273 aa). The Zn(2+) site is built by C221, C224, C240, and C243. A C4-type zinc finger spans residues 221-243; that stretch reads CDNCYGLNYKKVLKSKMTICEQC.

It belongs to the AccD/PCCB family. As to quaternary structure, acetyl-CoA carboxylase is a heterohexamer composed of biotin carboxyl carrier protein, biotin carboxylase and 2 subunits each of ACCase subunit alpha and ACCase plastid-coded subunit beta (accD). It depends on Zn(2+) as a cofactor.

The protein resides in the plastid. It carries out the reaction N(6)-carboxybiotinyl-L-lysyl-[protein] + acetyl-CoA = N(6)-biotinyl-L-lysyl-[protein] + malonyl-CoA. The protein operates within lipid metabolism; malonyl-CoA biosynthesis; malonyl-CoA from acetyl-CoA: step 1/1. Its function is as follows. Component of the acetyl coenzyme A carboxylase (ACC) complex. Biotin carboxylase (BC) catalyzes the carboxylation of biotin on its carrier protein (BCCP) and then the CO(2) group is transferred by the transcarboxylase to acetyl-CoA to form malonyl-CoA. In Cuscuta reflexa (Southern Asian dodder), this protein is Acetyl-coenzyme A carboxylase carboxyl transferase subunit beta.